The primary structure comprises 778 residues: Transcription factor kayak (778 aa).

Composition is skewed to low complexity over residues 24-54 (AQQL…HTQQ) and 77-98 (QYYQ…QRQL). Disordered stretches follow at residues 24 to 57 (AQQL…QNGL), 76 to 130 (NQYY…HQLR), 183 to 223 (QPTA…TTNG), 294 to 320 (APLV…VLAS), 356 to 414 (ASVM…GTGG), and 427 to 478 (RNTN…RKRR). A compositionally biased stretch (polar residues) spans 99 to 108 (PTQQPAASYE). 2 stretches are compositionally biased toward low complexity: residues 109–130 (QQQQ…HQLR) and 183–222 (QPTA…TTTN). A compositionally biased stretch (low complexity) spans 382–402 (ISDTSSGATDSTSYQNGHMMG). The segment covering 403 to 414 (NSGGGNGGGTGG) has biased composition (gly residues). Polar residues predominate over residues 427-436 (RNTNTSNSAT). The 64-residue stretch at 457–520 (EEKRRIRRER…NQLEYFLQAH (64 aa)) folds into the bZIP domain. Positions 459-478 (KRRIRRERNKQAAARCRKRR) are basic motif. The segment at 485–513 (LTEEVELLEKRGENLKKEMELLNETKNQL) is leucine-zipper. A compositionally biased stretch (low complexity) spans 550–571 (GSCGSGSSHHNNNSNSNDSSSG). Disordered stretches follow at residues 550-594 (GSCG…DLKP) and 756-778 (TSQN…LVSL). Residues 579–589 (TLNSTGRSNSP) show a composition bias toward polar residues. At serine 588 the chain carries Phosphoserine.

This sequence belongs to the bZIP family. Fos subfamily. In terms of assembly, homodimer. Heterodimer with Jra. The kay-Jra heterodimer binds more stably to the AP-1 site than either of the two proteins alone.

It localises to the nucleus. Its function is as follows. Developmentally regulated transcription factor AP-1 binds and recognizes the enhancer DNA sequence: 5'-TGA[CG]TCA-3'. May play a role in the function or determination of a particular subset of cells in the developing embryo. It is able to carry out its function either independently of or in conjunction with Jra. This Drosophila pseudoobscura pseudoobscura (Fruit fly) protein is Transcription factor kayak.